The following is a 178-amino-acid chain: Large ribosomal subunit protein uL5 (178 aa).

The protein belongs to the universal ribosomal protein uL5 family. Part of the 50S ribosomal subunit; part of the 5S rRNA/L5/L18/L25 subcomplex. Contacts the 5S rRNA and the P site tRNA. Forms a bridge to the 30S subunit in the 70S ribosome.

This is one of the proteins that bind and probably mediate the attachment of the 5S RNA into the large ribosomal subunit, where it forms part of the central protuberance. In the 70S ribosome it contacts protein S13 of the 30S subunit (bridge B1b), connecting the 2 subunits; this bridge is implicated in subunit movement. Contacts the P site tRNA; the 5S rRNA and some of its associated proteins might help stabilize positioning of ribosome-bound tRNAs. This is Large ribosomal subunit protein uL5 from Acinetobacter baylyi (strain ATCC 33305 / BD413 / ADP1).